A 418-amino-acid polypeptide reads, in one-letter code: cAMP-dependent protein kinase type II-beta regulatory subunit (418 aa).

A dimerization and phosphorylation region spans residues 2–153 (SIEIPAGLTE…RLQEACKDIL (152 aa)). Basic and acidic residues predominate over residues 45–57 (RKGTARFGHEGRT). A disordered region spans residues 45 to 98 (RKGTARFGHEGRTWGDAGAAGGGGTPSKGVNFAEEPRHSDSENGEEEEEEAADA). Thr69 carries the phosphothreonine modification. Residues Ser83 and Ser85 each carry the phosphoserine modification. The span at 86–96 (ENGEEEEEEAA) shows a compositional bias: acidic residues. Position 114 is a phosphoserine (Ser114). 3',5'-cyclic AMP is bound by residues 154–275 (LFKN…ESLP), Glu223, Arg232, 276–418 (FLKS…EPTA), Glu352, and Arg361.

The protein belongs to the cAMP-dependent kinase regulatory chain family. As to quaternary structure, the inactive form of the enzyme is composed of two regulatory chains and two catalytic chains. Activation by cAMP produces two active catalytic monomers and a regulatory dimer that binds four cAMP molecules. Interacts with PRKACA and PRKACB. Interacts with the phosphorylated form of PJA2. Forms a complex composed of PRKAR2B, GSK3B and GSKIP through GSKIP interaction; facilitates PKA-induced phosphorylation and regulates GSK3B activity. Phosphorylated by the activated catalytic chain. As to expression, four types of regulatory chains are found: I-alpha, I-beta, II-alpha, and II-beta. Their expression varies among tissues and is in some cases constitutive and in others inducible.

The protein localises to the cytoplasm. It is found in the cell membrane. Functionally, regulatory subunit of the cAMP-dependent protein kinases involved in cAMP signaling in cells. Type II regulatory chains mediate membrane association by binding to anchoring proteins, including the MAP2 kinase. The protein is cAMP-dependent protein kinase type II-beta regulatory subunit (PRKAR2B) of Bos taurus (Bovine).